Here is a 69-residue protein sequence, read N- to C-terminus: Large ribosomal subunit protein uL29 (69 aa).

The protein belongs to the universal ribosomal protein uL29 family.

This chain is Large ribosomal subunit protein uL29 (rpmC), found in Lactococcus lactis subsp. lactis (strain IL1403) (Streptococcus lactis).